The sequence spans 146 residues: D-aminoacyl-tRNA deacylase (146 aa).

Residues 137–138 (GP) carry the Gly-cisPro motif, important for rejection of L-amino acids motif.

This sequence belongs to the DTD family. Homodimer.

It localises to the cytoplasm. The enzyme catalyses glycyl-tRNA(Ala) + H2O = tRNA(Ala) + glycine + H(+). It carries out the reaction a D-aminoacyl-tRNA + H2O = a tRNA + a D-alpha-amino acid + H(+). An aminoacyl-tRNA editing enzyme that deacylates mischarged D-aminoacyl-tRNAs. Also deacylates mischarged glycyl-tRNA(Ala), protecting cells against glycine mischarging by AlaRS. Acts via tRNA-based rather than protein-based catalysis; rejects L-amino acids rather than detecting D-amino acids in the active site. By recycling D-aminoacyl-tRNA to D-amino acids and free tRNA molecules, this enzyme counteracts the toxicity associated with the formation of D-aminoacyl-tRNA entities in vivo and helps enforce protein L-homochirality. This Variovorax paradoxus (strain S110) protein is D-aminoacyl-tRNA deacylase.